The following is a 30-amino-acid chain: Cyclotide mden-I (30 aa).

The cyclopeptide (Gly-Asn) cross-link spans 1–30 (GIPCGESCVYIPCITTAIGCSCKNKVCYRN). 3 disulfides stabilise this stretch: C4–C20, C8–C22, and C13–C27.

Belongs to the cyclotide family. Bracelet subfamily. Post-translationally, this is a cyclic peptide.

Functionally, probably participates in a plant defense mechanism. The polypeptide is Cyclotide mden-I (Melicytus dentatus (Tree violet)).